We begin with the raw amino-acid sequence, 155 residues long: uncharacterized protein (155 aa).

Positions 37–140 constitute an SCP domain; that stretch reads IAELRKKLNL…GGYRLKTTDN (104 aa).

This is an uncharacterized protein from Borreliella burgdorferi (strain ATCC 35210 / DSM 4680 / CIP 102532 / B31) (Borrelia burgdorferi).